Reading from the N-terminus, the 138-residue chain is DNA-directed RNA polymerase subunit omega (138 aa).

Positions 117–138 (NLLGRDNFFSTPENRNTSNTDS) are disordered. Residues 124 to 138 (FFSTPENRNTSNTDS) are compositionally biased toward polar residues.

It belongs to the RNA polymerase subunit omega family. The RNAP catalytic core consists of 2 alpha, 1 beta, 1 beta' and 1 omega subunit. When a sigma factor is associated with the core the holoenzyme is formed, which can initiate transcription.

The catalysed reaction is RNA(n) + a ribonucleoside 5'-triphosphate = RNA(n+1) + diphosphate. Its function is as follows. Promotes RNA polymerase assembly. Latches the N- and C-terminal regions of the beta' subunit thereby facilitating its interaction with the beta and alpha subunits. The protein is DNA-directed RNA polymerase subunit omega of Ehrlichia canis (strain Jake).